Here is a 233-residue protein sequence, read N- to C-terminus: Homeobox protein EMX1 (233 aa).

The homeobox DNA-binding region spans 135-194 (PKRIRTAFSPSQLLRLERAFEKNHYVVGAERKQLASSLSLSETQVKVWFQNRRTKYKRQK). Positions 192–233 (RQKLEEEGPDSDQKKKGSHHINRWRLATKQPNGEDIDVTSND) are disordered. A compositionally biased stretch (basic and acidic residues) spans 193–206 (QKLEEEGPDSDQKK).

It belongs to the EMX homeobox family.

The protein resides in the nucleus. May function in combinations with OTX1/2 to specify cell fates in the developing central nervous system. The protein is Homeobox protein EMX1 (emx1) of Xenopus tropicalis (Western clawed frog).